A 267-amino-acid polypeptide reads, in one-letter code: MLKIGIVGCGAIGNFITKKVLDGTIKNAKISAVYDRNFDKAKTLSERTGAKICSSIDDLVKEDLDLVVEAASIKAVEEIAEKSLINNKDVLIMSVGALADKKLFLKLRDLAKTVGRKIYLPSGAIGGLDAIKALRLGEIEEVVLKTTKPVAALEDALKNLGYKPEDIKNPVIVFEGDVFKAIKEFPANINVSVTLSIAAEFPAKVVIVADPNAKLNKHELFVKSSIGTLRVCIENVPFEENPRTSALAAYSAVRLIRDLAEPVKVGT.

NAD(+)-binding residues include A124 and N190. Residue H218 is part of the active site.

This sequence belongs to the L-aspartate dehydrogenase family.

It carries out the reaction L-aspartate + NADP(+) + H2O = oxaloacetate + NH4(+) + NADPH + H(+). The enzyme catalyses L-aspartate + NAD(+) + H2O = oxaloacetate + NH4(+) + NADH + H(+). The protein operates within cofactor biosynthesis; NAD(+) biosynthesis; iminoaspartate from L-aspartate (dehydrogenase route): step 1/1. Functionally, specifically catalyzes the NAD or NADP-dependent dehydrogenation of L-aspartate to iminoaspartate. This is L-aspartate dehydrogenase from Methanocaldococcus jannaschii (strain ATCC 43067 / DSM 2661 / JAL-1 / JCM 10045 / NBRC 100440) (Methanococcus jannaschii).